Consider the following 407-residue polypeptide: Na(+)-translocating NADH-quinone reductase subunit F (407 aa).

A helical transmembrane segment spans residues 3–23; that stretch reads IILGVAMFTGIVMVLVLLILF. Positions 32–126 constitute a 2Fe-2S ferredoxin-type domain; sequence GDIAVEVNGD…NLKIELPEEI (95 aa). Residues Cys69, Cys75, Cys78, and Cys110 each contribute to the [2Fe-2S] cluster site. An FAD-binding FR-type domain is found at 129–269; sequence VKKWECEVIS…SGPFGEFFAK (141 aa).

The protein belongs to the NqrF family. As to quaternary structure, composed of six subunits; NqrA, NqrB, NqrC, NqrD, NqrE and NqrF. [2Fe-2S] cluster is required as a cofactor. The cofactor is FAD.

It is found in the cell inner membrane. The catalysed reaction is a ubiquinone + n Na(+)(in) + NADH + H(+) = a ubiquinol + n Na(+)(out) + NAD(+). In terms of biological role, NQR complex catalyzes the reduction of ubiquinone-1 to ubiquinol by two successive reactions, coupled with the transport of Na(+) ions from the cytoplasm to the periplasm. The first step is catalyzed by NqrF, which accepts electrons from NADH and reduces ubiquinone-1 to ubisemiquinone by a one-electron transfer pathway. In Serratia proteamaculans (strain 568), this protein is Na(+)-translocating NADH-quinone reductase subunit F.